We begin with the raw amino-acid sequence, 225 residues long: Phosphoribosylformylglycinamidine synthase subunit PurQ (225 aa).

A Glutamine amidotransferase type-1 domain is found at 6 to 225 (FGVVVFPGSN…WQSILRSFAA (220 aa)). Residue Cys-89 is the Nucleophile of the active site. Catalysis depends on residues His-198 and Glu-200.

As to quaternary structure, part of the FGAM synthase complex composed of 1 PurL, 1 PurQ and 2 PurS subunits.

Its subcellular location is the cytoplasm. It carries out the reaction N(2)-formyl-N(1)-(5-phospho-beta-D-ribosyl)glycinamide + L-glutamine + ATP + H2O = 2-formamido-N(1)-(5-O-phospho-beta-D-ribosyl)acetamidine + L-glutamate + ADP + phosphate + H(+). The enzyme catalyses L-glutamine + H2O = L-glutamate + NH4(+). It participates in purine metabolism; IMP biosynthesis via de novo pathway; 5-amino-1-(5-phospho-D-ribosyl)imidazole from N(2)-formyl-N(1)-(5-phospho-D-ribosyl)glycinamide: step 1/2. Part of the phosphoribosylformylglycinamidine synthase complex involved in the purines biosynthetic pathway. Catalyzes the ATP-dependent conversion of formylglycinamide ribonucleotide (FGAR) and glutamine to yield formylglycinamidine ribonucleotide (FGAM) and glutamate. The FGAM synthase complex is composed of three subunits. PurQ produces an ammonia molecule by converting glutamine to glutamate. PurL transfers the ammonia molecule to FGAR to form FGAM in an ATP-dependent manner. PurS interacts with PurQ and PurL and is thought to assist in the transfer of the ammonia molecule from PurQ to PurL. The sequence is that of Phosphoribosylformylglycinamidine synthase subunit PurQ from Synechococcus sp. (strain JA-2-3B'a(2-13)) (Cyanobacteria bacterium Yellowstone B-Prime).